The sequence spans 126 residues: MSDPRYQIDVSVVTRYLKDQSDPENDRFAFAYTITVQNNGTVKAKLMSRHWLITNGDGEVEEVRGAGVIGQQPLIEPGQSHTYSSGAVISTRVGTMQGSYQMFAEDGKRFDATIAPFRLAVPGALH.

The ApaG domain maps to 2–126 (SDPRYQIDVS…FRLAVPGALH (125 aa)).

The chain is Protein ApaG from Pseudomonas entomophila (strain L48).